The following is a 200-amino-acid chain: Recombination protein RecR (200 aa).

Residues 57 to 72 (CRQCRTLTEDDLCPQC) form a C4-type zinc finger. The 96-residue stretch at 80-175 (TLLCVVEGPM…IASRIAHGVP (96 aa)) folds into the Toprim domain.

It belongs to the RecR family.

Functionally, may play a role in DNA repair. It seems to be involved in an RecBC-independent recombinational process of DNA repair. It may act with RecF and RecO. This Pseudomonas fluorescens (strain Pf0-1) protein is Recombination protein RecR.